The chain runs to 182 residues: ATP-dependent protease subunit HslV (182 aa).

Thr12 is an active-site residue. Residues Ala167, Cys170, and Thr173 each coordinate Na(+).

Belongs to the peptidase T1B family. HslV subfamily. In terms of assembly, a double ring-shaped homohexamer of HslV is capped on each side by a ring-shaped HslU homohexamer. The assembly of the HslU/HslV complex is dependent on binding of ATP.

It is found in the cytoplasm. The enzyme catalyses ATP-dependent cleavage of peptide bonds with broad specificity.. Its activity is regulated as follows. Allosterically activated by HslU binding. Its function is as follows. Protease subunit of a proteasome-like degradation complex believed to be a general protein degrading machinery. The sequence is that of ATP-dependent protease subunit HslV from Pelodictyon phaeoclathratiforme (strain DSM 5477 / BU-1).